The chain runs to 134 residues: MVKIRLRRAGRKKLPVYQIVAADARAPRDGKFLEVIGHYQPTAKPHAITLDKERVAYWLGVGAQPTTTAHSLIRATGLLHEMNMKRKGRSEEEIAAEMEQWQARQNERREKRLAIKTRRRQAKKAAEAEGQESA.

Residues 105–134 (QNERREKRLAIKTRRRQAKKAAEAEGQESA) are disordered. Residues 114–123 (AIKTRRRQAK) show a composition bias toward basic residues.

Belongs to the bacterial ribosomal protein bS16 family.

In Chlorobium phaeobacteroides (strain BS1), this protein is Small ribosomal subunit protein bS16.